Here is a 466-residue protein sequence, read N- to C-terminus: Glutamate--tRNA ligase (466 aa).

The 'HIGH' region signature appears at 10–20 (PSPTGYLHIGG). The short motif at 237-241 (RLSKR) is the 'KMSKS' region element. K240 contributes to the ATP binding site.

It belongs to the class-I aminoacyl-tRNA synthetase family. Glutamate--tRNA ligase type 1 subfamily. As to quaternary structure, monomer.

The protein resides in the cytoplasm. It carries out the reaction tRNA(Glu) + L-glutamate + ATP = L-glutamyl-tRNA(Glu) + AMP + diphosphate. Its function is as follows. Catalyzes the attachment of glutamate to tRNA(Glu) in a two-step reaction: glutamate is first activated by ATP to form Glu-AMP and then transferred to the acceptor end of tRNA(Glu). The polypeptide is Glutamate--tRNA ligase (Syntrophotalea carbinolica (strain DSM 2380 / NBRC 103641 / GraBd1) (Pelobacter carbinolicus)).